The following is a 301-amino-acid chain: Homoserine O-acetyltransferase (301 aa).

C142 acts as the Acyl-thioester intermediate in catalysis. Substrate contacts are provided by K163 and S192. H235 functions as the Proton acceptor in the catalytic mechanism. The active site involves E237. R249 is a substrate binding site.

Belongs to the MetA family.

It localises to the cytoplasm. It catalyses the reaction L-homoserine + acetyl-CoA = O-acetyl-L-homoserine + CoA. The protein operates within amino-acid biosynthesis; L-methionine biosynthesis via de novo pathway; O-acetyl-L-homoserine from L-homoserine: step 1/1. Transfers an acetyl group from acetyl-CoA to L-homoserine, forming acetyl-L-homoserine. This is Homoserine O-acetyltransferase from Bacillus anthracis (strain A0248).